A 567-amino-acid chain; its full sequence is Structural protein ORF567 (567 aa).

The segment at 7 to 393 is disordered; sequence INALLGFPEE…MPIEHKPEQQ (387 aa). The span at 65 to 79 shows a compositional bias: pro residues; that stretch reads TPTPIRPAPPPPPPI. Residues 180 to 200 show a composition bias toward basic and acidic residues; the sequence is PKREPEHHTHGSTNNEHESKR. Residues 219-231 are compositionally biased toward low complexity; the sequence is THQTSPSHSSGGT. Pro residues-rich tracts occupy residues 253–278 and 285–299; these read MPIP…PTPP and TPTP…PPPT. Low complexity predominate over residues 300-312; that stretch reads HGSSSTNSSGSTN. Positions 319-335 are enriched in pro residues; that stretch reads PKPIPIPPTPPPPPPHH. A compositionally biased stretch (basic and acidic residues) spans 343-353; that stretch reads PKHESEHHDHG. Residues 354–372 show a composition bias toward low complexity; the sequence is SSSTNSSSSTSNSSSGGTN.

Its subcellular location is the virion. The polypeptide is Structural protein ORF567 (Acidianus two-tailed virus (ATV)).